The primary structure comprises 395 residues: Chorismate synthase (395 aa).

NADP(+) is bound by residues Arg40 and Arg46. Residues 99–120 (PREGRNAPLSRPRPGHADLTGM) form a disordered region. FMN contacts are provided by residues 134–136 (RSS), 256–257 (QA), Gly301, 316–320 (KPIPS), and Arg342.

Belongs to the chorismate synthase family. As to quaternary structure, homotetramer. Requires FMNH2 as cofactor.

The enzyme catalyses 5-O-(1-carboxyvinyl)-3-phosphoshikimate = chorismate + phosphate. Its pathway is metabolic intermediate biosynthesis; chorismate biosynthesis; chorismate from D-erythrose 4-phosphate and phosphoenolpyruvate: step 7/7. Catalyzes the anti-1,4-elimination of the C-3 phosphate and the C-6 proR hydrogen from 5-enolpyruvylshikimate-3-phosphate (EPSP) to yield chorismate, which is the branch point compound that serves as the starting substrate for the three terminal pathways of aromatic amino acid biosynthesis. This reaction introduces a second double bond into the aromatic ring system. This chain is Chorismate synthase, found in Bifidobacterium longum (strain DJO10A).